The sequence spans 98 residues: U10-barytoxin-Tl1a (98 aa).

An N-terminal signal peptide occupies residues Met1–Ala21. A propeptide spanning residues Ser22–Arg50 is cleaved from the precursor. Intrachain disulfides connect Cys57–Cys71, Cys64–Cys76, and Cys70–Cys89.

This sequence belongs to the neurotoxin 10 (Hwtx-1) family. 27 (ICK-3) subfamily. Expressed by the venom gland.

Its subcellular location is the secreted. Functionally, ion channel inhibitor. In Trittame loki (Brush-footed trapdoor spider), this protein is U10-barytoxin-Tl1a.